We begin with the raw amino-acid sequence, 303 residues long: Ornithine carbamoyltransferase (303 aa).

Carbamoyl phosphate-binding positions include 52–55 (STRT), Gln-79, Arg-103, and 130–133 (HPCQ). L-ornithine contacts are provided by residues Asn-161, Asp-222, and 226 to 227 (SM). Residues 262-263 (CL) and Lys-290 each bind carbamoyl phosphate.

Belongs to the aspartate/ornithine carbamoyltransferase superfamily. OTCase family.

The protein resides in the cytoplasm. The catalysed reaction is carbamoyl phosphate + L-ornithine = L-citrulline + phosphate + H(+). It functions in the pathway amino-acid biosynthesis; L-arginine biosynthesis; L-arginine from L-ornithine and carbamoyl phosphate: step 1/3. Reversibly catalyzes the transfer of the carbamoyl group from carbamoyl phosphate (CP) to the N(epsilon) atom of ornithine (ORN) to produce L-citrulline. This chain is Ornithine carbamoyltransferase, found in Desulfotalea psychrophila (strain LSv54 / DSM 12343).